Reading from the N-terminus, the 220-residue chain is Probable GTP-binding protein EngB (220 aa).

An EngB-type G domain is found at 41 to 219 (DRSEVCFAGR…RAEIAALAML (179 aa)). GTP contacts are provided by residues 49 to 56 (GRSNVGKS), 76 to 80 (GRTRE), 96 to 99 (DLPG), 164 to 167 (TKVD), and 197 to 200 (MTSA). Mg(2+)-binding residues include S56 and T78.

This sequence belongs to the TRAFAC class TrmE-Era-EngA-EngB-Septin-like GTPase superfamily. EngB GTPase family. Mg(2+) serves as cofactor.

Functionally, necessary for normal cell division and for the maintenance of normal septation. This is Probable GTP-binding protein EngB from Hyphomonas neptunium (strain ATCC 15444).